Here is a 388-residue protein sequence, read N- to C-terminus: L-lactate dehydrogenase (388 aa).

One can recognise an FMN hydroxy acid dehydrogenase domain in the interval 1 to 380 (MIISAASDYR…SADALSRVTR (380 aa)). Y24 provides a ligand contact to substrate. FMN is bound by residues S106 and Q127. Y129 contributes to the substrate binding site. T155 lines the FMN pocket. R164 is a binding site for substrate. K251 lines the FMN pocket. Catalysis depends on H275, which acts as the Proton acceptor. R278 contributes to the substrate binding site. Position 306–330 (306–330 (DSGIRSGLDVVRMLALGADAVLLGR)) interacts with FMN.

This sequence belongs to the FMN-dependent alpha-hydroxy acid dehydrogenase family. It depends on FMN as a cofactor.

The protein localises to the cell inner membrane. The enzyme catalyses (S)-lactate + A = pyruvate + AH2. Catalyzes the conversion of L-lactate to pyruvate. Is coupled to the respiratory chain. The protein is L-lactate dehydrogenase of Xanthomonas euvesicatoria pv. vesicatoria (strain 85-10) (Xanthomonas campestris pv. vesicatoria).